The sequence spans 488 residues: GTPase Der (488 aa).

EngA-type G domains are found at residues 3–166 (PVVA…AEAM) and 200–373 (IKLA…DSAT). GTP-binding positions include 9–16 (GRPNVGKS), 56–60 (DTGGI), 118–121 (NKVD), 206–213 (GKPNVGKS), 253–257 (DTAGV), and 318–321 (NKWD). The KH-like domain maps to 374 to 458 (RRVSTSMLTR…PIQLRFHEGD (85 aa)).

Belongs to the TRAFAC class TrmE-Era-EngA-EngB-Septin-like GTPase superfamily. EngA (Der) GTPase family. In terms of assembly, associates with the 50S ribosomal subunit.

GTPase that plays an essential role in the late steps of ribosome biogenesis. The sequence is that of GTPase Der from Shewanella amazonensis (strain ATCC BAA-1098 / SB2B).